A 144-amino-acid polypeptide reads, in one-letter code: Maximins 7/H1 (144 aa).

A signal peptide spans 1 to 18 (MNFKYIVAVSFLIASAYA). Residues 19–43 (RSEENDEQSLSQRDVLEEESLREIR) constitute a propeptide that is removed on maturation. At N70 the chain carries Asparagine amide. A propeptide spanning residues 74 to 123 (TAEDHEVMKRLEAVMRDLDSLDYPEEAAERETRGFNQEEIANLFTKKEKR) is cleaved from the precursor. L143 is subject to Leucine amide.

The protein belongs to the bombinin family. As to expression, expressed by the skin glands.

The protein resides in the secreted. Functionally, maximin-7 shows antimicrobial activity against bacteria and against the fungus C.albicans. It has little hemolytic activity. Its function is as follows. Maximin-H1 shows antibacterial activity against both Gram-positive and Gram-negative bacteria. It also shows antimicrobial activity against the fungus C.albicans. Shows strong hemolytic activity. The polypeptide is Maximins 7/H1 (Bombina maxima (Giant fire-bellied toad)).